The sequence spans 197 residues: Nucleoid occlusion factor SlmA (197 aa).

The 61-residue stretch at 7 to 67 (INRREHILQC…GLIEFIEESL (61 aa)) folds into the HTH tetR-type domain. Positions 30 to 49 (TTAKLASEVGVSEAALYRHF) form a DNA-binding region, H-T-H motif. Residues 109–136 (DALLGENERLRSRISNLFAKIETQLKQI) are a coiled coil.

Belongs to the nucleoid occlusion factor SlmA family. As to quaternary structure, homodimer. Interacts with FtsZ.

Its subcellular location is the cytoplasm. It localises to the nucleoid. Its function is as follows. Required for nucleoid occlusion (NO) phenomenon, which prevents Z-ring formation and cell division over the nucleoid. Acts as a DNA-associated cell division inhibitor that binds simultaneously chromosomal DNA and FtsZ, and disrupts the assembly of FtsZ polymers. SlmA-DNA-binding sequences (SBS) are dispersed on non-Ter regions of the chromosome, preventing FtsZ polymerization at these regions. In Shewanella baltica (strain OS223), this protein is Nucleoid occlusion factor SlmA.